The following is a 328-amino-acid chain: Glycerol-3-phosphate dehydrogenase [NAD(P)+] (328 aa).

The NADPH site is built by tryptophan 15, arginine 35, and lysine 108. The sn-glycerol 3-phosphate site is built by lysine 108, glycine 136, and serine 138. Alanine 140 is a binding site for NADPH. Sn-glycerol 3-phosphate is bound by residues lysine 191, aspartate 244, serine 254, arginine 255, and asparagine 256. The active-site Proton acceptor is the lysine 191. NADPH is bound at residue arginine 255. Positions 275 and 277 each coordinate NADPH.

Belongs to the NAD-dependent glycerol-3-phosphate dehydrogenase family.

It is found in the cytoplasm. The enzyme catalyses sn-glycerol 3-phosphate + NAD(+) = dihydroxyacetone phosphate + NADH + H(+). It carries out the reaction sn-glycerol 3-phosphate + NADP(+) = dihydroxyacetone phosphate + NADPH + H(+). The protein operates within membrane lipid metabolism; glycerophospholipid metabolism. Its function is as follows. Catalyzes the reduction of the glycolytic intermediate dihydroxyacetone phosphate (DHAP) to sn-glycerol 3-phosphate (G3P), the key precursor for phospholipid synthesis. The sequence is that of Glycerol-3-phosphate dehydrogenase [NAD(P)+] from Azorhizobium caulinodans (strain ATCC 43989 / DSM 5975 / JCM 20966 / LMG 6465 / NBRC 14845 / NCIMB 13405 / ORS 571).